We begin with the raw amino-acid sequence, 258 residues long: uncharacterized protein (258 aa).

The next 3 helical transmembrane spans lie at 38-58 (VFGLLIALICFSNVLCFLFIA), 72-92 (ALIFTLFIPFVTSLLANIIFI), and 111-131 (FLVICAFSSLPIVNIWLMLWW).

Its subcellular location is the cell membrane. This is an uncharacterized protein from Mycoplasma pneumoniae (strain ATCC 29342 / M129 / Subtype 1) (Mycoplasmoides pneumoniae).